A 192-amino-acid chain; its full sequence is Xanthine phosphoribosyltransferase (192 aa).

2 residues coordinate xanthine: Leu20 and Asn27. 5-phospho-alpha-D-ribose 1-diphosphate is bound at residue 128-132 (AHGEA). Lys156 lines the xanthine pocket.

Belongs to the purine/pyrimidine phosphoribosyltransferase family. Xpt subfamily. In terms of assembly, homodimer.

It is found in the cytoplasm. The catalysed reaction is XMP + diphosphate = xanthine + 5-phospho-alpha-D-ribose 1-diphosphate. Its pathway is purine metabolism; XMP biosynthesis via salvage pathway; XMP from xanthine: step 1/1. Its function is as follows. Converts the preformed base xanthine, a product of nucleic acid breakdown, to xanthosine 5'-monophosphate (XMP), so it can be reused for RNA or DNA synthesis. The protein is Xanthine phosphoribosyltransferase of Lactobacillus johnsonii (strain CNCM I-12250 / La1 / NCC 533).